The following is a 429-amino-acid chain: UDP-N-acetylglucosamine 1-carboxyvinyltransferase (429 aa).

Residue 22 to 23 (KN) participates in phosphoenolpyruvate binding. A UDP-N-acetyl-alpha-D-glucosamine-binding site is contributed by R102. The active-site Proton donor is the C126. 2-(S-cysteinyl)pyruvic acid O-phosphothioketal is present on C126. Residues 131–135 (RPVDL), D316, and I338 each bind UDP-N-acetyl-alpha-D-glucosamine.

This sequence belongs to the EPSP synthase family. MurA subfamily.

Its subcellular location is the cytoplasm. The catalysed reaction is phosphoenolpyruvate + UDP-N-acetyl-alpha-D-glucosamine = UDP-N-acetyl-3-O-(1-carboxyvinyl)-alpha-D-glucosamine + phosphate. It functions in the pathway cell wall biogenesis; peptidoglycan biosynthesis. Cell wall formation. Adds enolpyruvyl to UDP-N-acetylglucosamine. In Afipia carboxidovorans (strain ATCC 49405 / DSM 1227 / KCTC 32145 / OM5) (Oligotropha carboxidovorans), this protein is UDP-N-acetylglucosamine 1-carboxyvinyltransferase.